Consider the following 249-residue polypeptide: Cis-4-hydroxycyclohexanecarboxylate dehydrogenase (249 aa).

Residues Asp38, Asp63, Val64, Asn90, Tyr156, Lys160, Ala189, and Thr191 each coordinate NAD(+). Catalysis depends on Tyr156, which acts as the Proton acceptor.

It belongs to the short-chain dehydrogenases/reductases (SDR) family. As to quaternary structure, homotetramer.

It carries out the reaction cis-4-hydroxycyclohexane-1-carboxylate + NAD(+) = 4-oxocyclohexane-1-carboxylate + NADH + H(+). Its function is as follows. Dehydrogenase involved in a cyclohexanecarboxylate (CHCA) degradation pathway. Catalyzes the NAD(+)-dependent dehydrogenation of cis-4-hydroxycyclohexanecarboxylate (cis-4-hydroxyCHCA) to form 4-oxocyclohexanecarboxylate (4-oxoCHCA). Is highly specific for the cis-4-hydroxy derivative and shows only weak activity with trans-4-hydroxyCHCA. Cannot use NADP(+). The polypeptide is Cis-4-hydroxycyclohexanecarboxylate dehydrogenase (Sinomonas cyclohexanicum (Corynebacterium cyclohexanicum)).